The following is a 425-amino-acid chain: Adenylosuccinate synthetase (425 aa).

GTP is bound by residues 12 to 18 and 40 to 42; these read GDEGKGK and GHT. The active-site Proton acceptor is D13. Mg(2+) contacts are provided by D13 and G40. IMP-binding positions include 13–16, 38–41, T130, R144, Q224, T239, and R301; these read DEGK and NAGH. The Proton donor role is filled by H41. 297 to 303 serves as a coordination point for substrate; sequence TVSNRRR. GTP-binding positions include R303, 329-331, and 411-413; these read KLD and STS.

This sequence belongs to the adenylosuccinate synthetase family. In terms of assembly, homodimer. Mg(2+) is required as a cofactor.

It is found in the cytoplasm. The catalysed reaction is IMP + L-aspartate + GTP = N(6)-(1,2-dicarboxyethyl)-AMP + GDP + phosphate + 2 H(+). It participates in purine metabolism; AMP biosynthesis via de novo pathway; AMP from IMP: step 1/2. In terms of biological role, plays an important role in the de novo pathway of purine nucleotide biosynthesis. Catalyzes the first committed step in the biosynthesis of AMP from IMP. This chain is Adenylosuccinate synthetase, found in Wolbachia pipientis subsp. Culex pipiens (strain wPip).